The sequence spans 354 residues: S-adenosylmethionine:tRNA ribosyltransferase-isomerase (354 aa).

This sequence belongs to the QueA family. In terms of assembly, monomer.

It is found in the cytoplasm. The enzyme catalyses 7-aminomethyl-7-carbaguanosine(34) in tRNA + S-adenosyl-L-methionine = epoxyqueuosine(34) in tRNA + adenine + L-methionine + 2 H(+). It participates in tRNA modification; tRNA-queuosine biosynthesis. In terms of biological role, transfers and isomerizes the ribose moiety from AdoMet to the 7-aminomethyl group of 7-deazaguanine (preQ1-tRNA) to give epoxyqueuosine (oQ-tRNA). This Salmonella gallinarum (strain 287/91 / NCTC 13346) protein is S-adenosylmethionine:tRNA ribosyltransferase-isomerase.